A 226-amino-acid polypeptide reads, in one-letter code: Glutathione peroxidase 3 (226 aa).

The N-terminal stretch at 1 to 24 (MARLLQASCLLSLLLAGFLPQSRG) is a signal peptide. Sec-73 is a catalytic residue. Position 73 (Sec-73) is a non-standard amino acid, selenocysteine.

The protein belongs to the glutathione peroxidase family. In terms of assembly, homotetramer. In terms of tissue distribution, secreted in plasma.

The protein resides in the secreted. It catalyses the reaction 2 glutathione + H2O2 = glutathione disulfide + 2 H2O. The catalysed reaction is tert-butyl hydroperoxide + 2 glutathione = tert-butanol + glutathione disulfide + H2O. Functionally, protects cells and enzymes from oxidative damage, by catalyzing the reduction of hydrogen peroxide, lipid peroxides and organic hydroperoxide, by glutathione. The chain is Glutathione peroxidase 3 from Sapajus apella (Brown-capped capuchin).